The primary structure comprises 830 residues: Post-transcriptional regulator MKT1 (830 aa).

Lys4 is covalently cross-linked (Glycyl lysine isopeptide (Lys-Gly) (interchain with G-Cter in ubiquitin)). The segment at 130-380 (RSRGWTQWNN…SPATTVTKNA (251 aa)) is interaction with PBP1. The segment at 347 to 400 (DSEKNNKDGKKSNLSSPSSASSSASPATTVTKNASEKLTYEKSSTKEVRKPRDI) is disordered. 3 positions are modified to phosphoserine: Ser358, Ser362, and Ser371. The span at 361–373 (SSPSSASSSASPA) shows a compositional bias: low complexity. Over residues 380–400 (ASEKLTYEKSSTKEVRKPRDI) the composition is skewed to basic and acidic residues.

It belongs to the XPG/RAD2 endonuclease family. As to quaternary structure, interacts (via C-terminus) with PBP1 (via C-terminus).

It is found in the cytoplasm. The protein resides in the cytosol. Involved in 3'-UTR mediated RNA regulation. Binds to RNA-binding and RNA regulatory proteins. Complexes with PAB1-binding protein to promote mRNA interactions with poly(A)-binding protein. Promotes mating-type switching in mother cells by positively regulating HO expression. The sequence is that of Post-transcriptional regulator MKT1 (MKT1) from Saccharomyces cerevisiae (strain ATCC 204508 / S288c) (Baker's yeast).